Here is a 77-residue protein sequence, read N- to C-terminus: Delta/omega-plectoxin-Pt1a (77 aa).

The signal sequence occupies residues 1-20; it reads MKHLIVAVVLLSALAICTSA. The propeptide occupies 21–34; the sequence is EEEQVNVPFRPEER. 5 disulfide bridges follow: cysteine 38–cysteine 51, cysteine 45–cysteine 57, cysteine 50–cysteine 67, cysteine 54–cysteine 74, and cysteine 59–cysteine 65. A lipid anchor (O-palmitoyl serine) is attached at serine 73. Cysteine amide is present on cysteine 74.

Belongs to the neurotoxin 02 (plectoxin) family. 01 (Tx3) subfamily. In terms of tissue distribution, expressed by the venom gland.

It localises to the secreted. Excitatory toxin that acts on both calcium and sodium (Nav) channels. It preferentially blocks a subset of calcium channels that is apparently not required for neurotransmitter release, it decreases threshold for sodium channel activation and it slows sodium channel inactivation. As it enhances synaptic transmission by prolonging presynaptic release of neurotransmitter, its effects on sodium and calcium channels may act synergistically to sustain the terminal excitability. In Plectreurys tristis (Spider), this protein is Delta/omega-plectoxin-Pt1a.